The sequence spans 245 residues: Cell division protein ZapD (245 aa).

The protein belongs to the ZapD family. Interacts with FtsZ.

The protein resides in the cytoplasm. Its function is as follows. Cell division factor that enhances FtsZ-ring assembly. Directly interacts with FtsZ and promotes bundling of FtsZ protofilaments, with a reduction in FtsZ GTPase activity. In Photobacterium profundum (strain SS9), this protein is Cell division protein ZapD.